The primary structure comprises 405 residues: Homocitrate synthase AksA (405 aa).

One can recognise a Pyruvate carboxyltransferase domain in the interval 23–274 (IEICDVTLRD…IERYDTTKLN (252 aa)).

The protein belongs to the alpha-IPM synthase/homocitrate synthase family.

The enzyme catalyses acetyl-CoA + 2-oxoglutarate + H2O = (2R)-homocitrate + CoA + H(+). The catalysed reaction is 2-oxoadipate + acetyl-CoA + H2O = (R)-dihomocitrate + CoA + H(+). It carries out the reaction 2-oxoheptanedioate + acetyl-CoA + H2O = (R)-trihomocitrate + CoA + H(+). It functions in the pathway organic acid metabolism; 2-oxosuberate biosynthesis. In terms of biological role, catalyzes the condensation of alpha-ketoglutarate and acetyl-CoA to form (R)-homocitrate. Can also catalyze the condensation of alpha-ketoadipate with acetyl-CoA to form (R)-homo(2)citrate, and the condensation of alpha-ketopimelate with acetyl-CoA to form (R)-homo(3)citrate. These reactions are part of the biosynthesis pathway of coenzyme B and biotin. The protein is Homocitrate synthase AksA (aksA) of Methanosarcina mazei (strain ATCC BAA-159 / DSM 3647 / Goe1 / Go1 / JCM 11833 / OCM 88) (Methanosarcina frisia).